A 54-amino-acid chain; its full sequence is MPQLDFTWWIINFFIIWTAILLTLVILVNNKTAQNLTTTDSLQIEKNSTNWQWL.

The chain crosses the membrane as a helical span at residues 8–28 (WWIINFFIIWTAILLTLVILV).

The protein belongs to the ATPase protein 8 family. As to quaternary structure, F-type ATPases have 2 components, CF(1) - the catalytic core - and CF(0) - the membrane proton channel.

The protein resides in the mitochondrion membrane. In terms of biological role, mitochondrial membrane ATP synthase (F(1)F(0) ATP synthase or Complex V) produces ATP from ADP in the presence of a proton gradient across the membrane which is generated by electron transport complexes of the respiratory chain. F-type ATPases consist of two structural domains, F(1) - containing the extramembraneous catalytic core and F(0) - containing the membrane proton channel, linked together by a central stalk and a peripheral stalk. During catalysis, ATP synthesis in the catalytic domain of F(1) is coupled via a rotary mechanism of the central stalk subunits to proton translocation. Part of the complex F(0) domain. Minor subunit located with subunit a in the membrane. This chain is ATP synthase protein 8 (MT-ATP8), found in Paracentrotus lividus (Common sea urchin).